A 537-amino-acid chain; its full sequence is Pentatricopeptide repeat-containing protein At4g32450, mitochondrial (537 aa).

Residues 1-110 (MIYTLTRGSL…EHSEIINQRN (110 aa)) constitute a mitochondrion transit peptide. Polar residues predominate over residues 113-140 (WQSSDGCSSYGTTGNGVPQENNTGGNHF). The tract at residues 113 to 148 (WQSSDGCSSYGTTGNGVPQENNTGGNHFQQDHSGHS) is disordered. 6 PPR repeats span residues 145-179 (SGHSSLDELDSICREGKVKKAVEIIKSWRNEGYVV), 180-210 (DLPRLFWIAQLCGDAQALQEAKVVHEFITSS), 215-249 (DISAYNSIIEMYSGCGSVEDALTVFNSMPERNLET), 250-280 (WCGVIRCFAKNGQGEDAIDTFSRFKQEGNKP), 281-316 (DGEMFKEIFFACGVLGDMNEGLLHFESMYKEYGIIP), and 317-347 (CMEHYVSLVKMLAEPGYLDEALRFVESMEPN). The type E(+) motif stretch occupies residues 412-442 (YGIRYMAAGDISRPENRELYMALKSLKEHMI). A type DYW motif region spans residues 443-537 (EIGYVPLSKL…DGVCSCREYW (95 aa)).

The protein belongs to the PPR family. PCMP-H subfamily.

The protein resides in the mitochondrion. This chain is Pentatricopeptide repeat-containing protein At4g32450, mitochondrial (PCMP-H63), found in Arabidopsis thaliana (Mouse-ear cress).